The chain runs to 363 residues: tRNA/tmRNA (uracil-C(5))-methyltransferase (363 aa).

Glutamine 187, tyrosine 215, asparagine 220, glutamate 236, and aspartate 296 together coordinate S-adenosyl-L-methionine. The Nucleophile role is filled by cysteine 321. The active-site Proton acceptor is glutamate 355.

This sequence belongs to the class I-like SAM-binding methyltransferase superfamily. RNA M5U methyltransferase family. TrmA subfamily.

It catalyses the reaction uridine(54) in tRNA + S-adenosyl-L-methionine = 5-methyluridine(54) in tRNA + S-adenosyl-L-homocysteine + H(+). The catalysed reaction is uridine(341) in tmRNA + S-adenosyl-L-methionine = 5-methyluridine(341) in tmRNA + S-adenosyl-L-homocysteine + H(+). In terms of biological role, dual-specificity methyltransferase that catalyzes the formation of 5-methyluridine at position 54 (m5U54) in all tRNAs, and that of position 341 (m5U341) in tmRNA (transfer-mRNA). The sequence is that of tRNA/tmRNA (uracil-C(5))-methyltransferase from Pseudomonas aeruginosa (strain UCBPP-PA14).